Reading from the N-terminus, the 311-residue chain is Aspartate carbamoyltransferase catalytic subunit (311 aa).

Carbamoyl phosphate-binding residues include R55 and T56. L-aspartate is bound at residue K83. Carbamoyl phosphate is bound by residues R105, H133, and Q136. R166 and R220 together coordinate L-aspartate. 2 residues coordinate carbamoyl phosphate: G261 and P262.

The protein belongs to the aspartate/ornithine carbamoyltransferase superfamily. ATCase family. Heterododecamer (2C3:3R2) of six catalytic PyrB chains organized as two trimers (C3), and six regulatory PyrI chains organized as three dimers (R2).

It catalyses the reaction carbamoyl phosphate + L-aspartate = N-carbamoyl-L-aspartate + phosphate + H(+). Its pathway is pyrimidine metabolism; UMP biosynthesis via de novo pathway; (S)-dihydroorotate from bicarbonate: step 2/3. In terms of biological role, catalyzes the condensation of carbamoyl phosphate and aspartate to form carbamoyl aspartate and inorganic phosphate, the committed step in the de novo pyrimidine nucleotide biosynthesis pathway. This is Aspartate carbamoyltransferase catalytic subunit from Chlorobium chlorochromatii (strain CaD3).